The primary structure comprises 390 residues: Transforming growth factor beta-1 proprotein (390 aa).

The signal sequence occupies residues 1–29 (MPPSGLRLLPLLLPLLWLLVLTPGRPAAG). The segment at 30 to 74 (LSTCKTIDMELVKRKRIEAIRGQILSKLRLASPPSQGEVPPGPLP) is straightjacket domain. Residues 75-271 (EAVLALYNST…ATPLERAQHL (197 aa)) are arm domain. N-linked (GlcNAc...) asparagine glycans are attached at residues N82, N136, and N176. Residues 226–252 (DSRDNTLQVDINGFTTGRRGDLATIHG) form a bowtie tail region. The Cell attachment site motif lies at 244–246 (RGD). Intrachain disulfides connect C285/C294, C293/C356, C322/C387, and C326/C389.

Belongs to the TGF-beta family. As to quaternary structure, homodimer; disulfide-linked. Interacts with the serine proteases, HTRA1 and HTRA3: the interaction with either inhibits TGFB1-mediated signaling and the HTRA protease activity is required for this inhibition. May interact with THSD4; this interaction may lead to sequestration by FBN1 microfibril assembly and attenuation of TGFB signaling. Interacts with CD109, DPT and ASPN. Interacts with EFEMP2. Interacts with TSKU; the interaction contributes to regulation of the hair cycle. In terms of assembly, homodimer; disulfide-linked. Interacts with transforming growth factor beta-1 (TGF-beta-1) chain; interaction is non-covalent and maintains TGF-beta-1 in a latent state; each latency-associated peptide (LAP) monomer interacts with TGF-beta-1 in the other monomer. Interacts with LTBP1; leading to regulation of TGF-beta-1 activation. Interacts with LRRC32/GARP; leading to regulation of TGF-beta-1 activation on the surface of activated regulatory T-cells (Tregs). Interacts with LRRC33/NRROS; leading to regulation of TGF-beta-1 in macrophages and microglia. Interacts (via cell attachment site) with integrins ITGAV and ITGB6 (ITGAV:ITGB6), leading to release of the active TGF-beta-1. Interacts with NREP; the interaction results in a decrease in TGFB1 autoinduction. Interacts with HSP90AB1; inhibits latent TGFB1 activation. Interact with PSG9; leading to TGFB1 activation. Interacts with TGFBR3. Homodimer; disulfide-linked. Interacts with TGF-beta receptors (TGFBR1 and TGFBR2), leading to signal transduction. Post-translationally, transforming growth factor beta-1 proprotein: The precursor proprotein is cleaved in the Golgi apparatus by FURIN to form Transforming growth factor beta-1 (TGF-beta-1) and Latency-associated peptide (LAP) chains, which remain non-covalently linked, rendering TGF-beta-1 inactive. N-glycosylated. Deglycosylation leads to activation of Transforming growth factor beta-1 (TGF-beta-1); mechanisms triggering deglycosylation-driven activation of TGF-beta-1 are however unclear. As to expression, highly expressed in bone. Abundantly expressed in articular cartilage and chondrocytes and is increased in osteoarthritis (OA). Colocalizes with ASPN in chondrocytes within OA lesions of articular cartilage.

The protein localises to the secreted. It is found in the extracellular space. It localises to the extracellular matrix. Functionally, transforming growth factor beta-1 proprotein: Precursor of the Latency-associated peptide (LAP) and Transforming growth factor beta-1 (TGF-beta-1) chains, which constitute the regulatory and active subunit of TGF-beta-1, respectively. In terms of biological role, required to maintain the Transforming growth factor beta-1 (TGF-beta-1) chain in a latent state during storage in extracellular matrix. Associates non-covalently with TGF-beta-1 and regulates its activation via interaction with 'milieu molecules', such as LTBP1, LRRC32/GARP and LRRC33/NRROS, that control activation of TGF-beta-1. Interaction with LRRC33/NRROS regulates activation of TGF-beta-1 in macrophages and microglia. Interaction with LRRC32/GARP controls activation of TGF-beta-1 on the surface of activated regulatory T-cells (Tregs). Interaction with integrins (ITGAV:ITGB6 or ITGAV:ITGB8) results in distortion of the Latency-associated peptide chain and subsequent release of the active TGF-beta-1. Multifunctional protein that regulates the growth and differentiation of various cell types and is involved in various processes, such as normal development, immune function, microglia function and responses to neurodegeneration. Activation into mature form follows different steps: following cleavage of the proprotein in the Golgi apparatus, Latency-associated peptide (LAP) and Transforming growth factor beta-1 (TGF-beta-1) chains remain non-covalently linked rendering TGF-beta-1 inactive during storage in extracellular matrix. At the same time, LAP chain interacts with 'milieu molecules', such as LTBP1, LRRC32/GARP and LRRC33/NRROS that control activation of TGF-beta-1 and maintain it in a latent state during storage in extracellular milieus. TGF-beta-1 is released from LAP by integrins (ITGAV:ITGB6 or ITGAV:ITGB8): integrin-binding to LAP stabilizes an alternative conformation of the LAP bowtie tail and results in distortion of the LAP chain and subsequent release of the active TGF-beta-1. Once activated following release of LAP, TGF-beta-1 acts by binding to TGF-beta receptors (TGFBR1 and TGFBR2), which transduce signal. While expressed by many cells types, TGF-beta-1 only has a very localized range of action within cell environment thanks to fine regulation of its activation by Latency-associated peptide chain (LAP) and 'milieu molecules'. Plays an important role in bone remodeling: acts as a potent stimulator of osteoblastic bone formation, causing chemotaxis, proliferation and differentiation in committed osteoblasts. Can promote either T-helper 17 cells (Th17) or regulatory T-cells (Treg) lineage differentiation in a concentration-dependent manner. At high concentrations, leads to FOXP3-mediated suppression of RORC and down-regulation of IL-17 expression, favoring Treg cell development. At low concentrations in concert with IL-6 and IL-21, leads to expression of the IL-17 and IL-23 receptors, favoring differentiation to Th17 cells. Stimulates sustained production of collagen through the activation of CREB3L1 by regulated intramembrane proteolysis (RIP). Mediates SMAD2/3 activation by inducing its phosphorylation and subsequent translocation to the nucleus. Positively regulates odontoblastic differentiation in dental papilla cells, via promotion of IPO7-mediated translocation of phosphorylated SMAD2 to the nucleus and subsequent transcription of target genes. Can induce epithelial-to-mesenchymal transition (EMT) and cell migration in various cell types. In Homo sapiens (Human), this protein is Transforming growth factor beta-1 proprotein.